Reading from the N-terminus, the 134-residue chain is Large ribosomal subunit protein bL20 (134 aa).

The protein belongs to the bacterial ribosomal protein bL20 family.

Binds directly to 23S ribosomal RNA and is necessary for the in vitro assembly process of the 50S ribosomal subunit. It is not involved in the protein synthesizing functions of that subunit. The sequence is that of Large ribosomal subunit protein bL20 from Sinorhizobium medicae (strain WSM419) (Ensifer medicae).